We begin with the raw amino-acid sequence, 1393 residues long: Rab3 GTPase-activating protein non-catalytic subunit (1393 aa).

The disordered stretch occupies residues 36–67; the sequence is RDPSKSTDWEDDGWGAWEENEPQEPEEEGNTC. Position 39 is a phosphoserine (Ser39). Residues 44–64 are compositionally biased toward acidic residues; the sequence is WEDDGWGAWEENEPQEPEEEG. A Phosphoserine modification is found at Ser450. Residue Thr901 is modified to Phosphothreonine. Phosphoserine is present on residues Ser916 and Ser978.

Belongs to the Rab3-GAP regulatory subunit family. In terms of assembly, the Rab3 GTPase-activating complex is a heterodimer composed of RAB3GAP1 and RAB3GAP2. The Rab3 GTPase-activating complex interacts with DMXL2. Interacts with LMAN1. As to expression, ubiquitous.

It localises to the cytoplasm. The protein resides in the endoplasmic reticulum. Functionally, regulatory subunit of the Rab3 GTPase-activating (Rab3GAP) complex composed of RAB3GAP1 and RAB3GAP2, which has GTPase-activating protein (GAP) activity towards various Rab3 subfamily members (RAB3A, RAB3B, RAB3C and RAB3D), RAB5A and RAB43, and guanine nucleotide exchange factor (GEF) activity towards RAB18. As part of the Rab3GAP complex, acts as a GAP for Rab3 proteins by converting active RAB3-GTP to the inactive form RAB3-GDP. Rab3 proteins are involved in regulated exocytosis of neurotransmitters and hormones. The Rab3GAP complex acts as a GEF for RAB18 by promoting the conversion of inactive RAB18-GDP to the active form RAB18-GTP. Recruits and stabilizes RAB18 at the cis-Golgi membrane in human fibroblasts where RAB18 is most likely activated. Also involved in RAB18 recruitment at the endoplasmic reticulum (ER) membrane where it maintains proper ER structure. Required for normal eye and brain development. May participate in neurodevelopmental processes such as proliferation, migration and differentiation before synapse formation, and non-synaptic vesicular release of neurotransmitters. This is Rab3 GTPase-activating protein non-catalytic subunit from Homo sapiens (Human).